A 544-amino-acid chain; its full sequence is Chaperonin GroEL 2 (544 aa).

ATP is bound by residues 29 to 32 (TLGP), 86 to 90 (DGTTT), G413, 479 to 481 (NAA), and D495.

This sequence belongs to the chaperonin (HSP60) family. In terms of assembly, forms a cylinder of 14 subunits composed of two heptameric rings stacked back-to-back. Interacts with the co-chaperonin GroES.

Its subcellular location is the cytoplasm. The catalysed reaction is ATP + H2O + a folded polypeptide = ADP + phosphate + an unfolded polypeptide.. In terms of biological role, together with its co-chaperonin GroES, plays an essential role in assisting protein folding. The GroEL-GroES system forms a nano-cage that allows encapsulation of the non-native substrate proteins and provides a physical environment optimized to promote and accelerate protein folding. This is Chaperonin GroEL 2 from Synechococcus sp. (strain WH7803).